Here is a 125-residue protein sequence, read N- to C-terminus: Protein ApaG (125 aa).

Residues 1 to 125 enclose the ApaG domain; sequence MINSPRVCVQ…FRLAIPSLIN (125 aa).

This chain is Protein ApaG, found in Sodalis glossinidius (strain morsitans).